Reading from the N-terminus, the 319-residue chain is D-alanine--D-alanine ligase B (319 aa).

An ATP-grasp domain is found at K117 to A312. A143 to T198 provides a ligand contact to ATP. Mg(2+) is bound by residues D266, E279, and N281.

It belongs to the D-alanine--D-alanine ligase family. Mg(2+) serves as cofactor. The cofactor is Mn(2+).

The protein resides in the cytoplasm. It carries out the reaction 2 D-alanine + ATP = D-alanyl-D-alanine + ADP + phosphate + H(+). The protein operates within cell wall biogenesis; peptidoglycan biosynthesis. Its function is as follows. Cell wall formation. This chain is D-alanine--D-alanine ligase B, found in Pseudomonas aeruginosa (strain ATCC 15692 / DSM 22644 / CIP 104116 / JCM 14847 / LMG 12228 / 1C / PRS 101 / PAO1).